Here is a 323-residue protein sequence, read N- to C-terminus: COP9 signalosome complex subunit 6 (323 aa).

The region spanning 37 to 170 (VALHPLVILN…VSVFESVIDI (134 aa)) is the MPN domain.

Belongs to the peptidase M67A family. CSN6 subfamily. As to quaternary structure, component of the CSN complex, composed of COPS1/GPS1, COPS2, COPS3, COPS4, COPS5, COPS6, COPS7 (COPS7A or COPS7B), COPS8 and COPS9. In the complex, it probably interacts directly with COPS2, COPS4, COPS5, COPS7 (COPS7A or COPS7B) and COPS9. Interacts with the translation initiation factor EIF3S6. Interacts weakly with RBX1. Directly interacts with COP1 and 14-3-3 protein sigma/SFN. Interacts with ERCC6.

The protein localises to the cytoplasm. The protein resides in the nucleus. Its function is as follows. Component of the COP9 signalosome complex (CSN), a complex involved in various cellular and developmental processes. The CSN complex is an essential regulator of the ubiquitin (Ubl) conjugation pathway by mediating the deneddylation of the cullin subunits of SCF-type E3 ligase complexes, leading to decrease the Ubl ligase activity of SCF-type complexes such as SCF, CSA or DDB2. The complex is also involved in phosphorylation of p53/TP53, c-jun/JUN, IkappaBalpha/NFKBIA, ITPK1 and IRF8, possibly via its association with CK2 and PKD kinases. CSN-dependent phosphorylation of TP53 and JUN promotes and protects degradation by the Ubl system, respectively. Has some glucocorticoid receptor-responsive activity. Stabilizes COP1 through reducing COP1 auto-ubiquitination and decelerating COP1 turnover rate, hence regulates the ubiquitination of COP1 targets, including SFN. This Sus scrofa (Pig) protein is COP9 signalosome complex subunit 6 (COPS6).